The following is a 338-amino-acid chain: Glyceraldehyde-3-phosphate dehydrogenase (338 aa).

Residues 12 to 13 (RI), aspartate 34, and arginine 79 contribute to the NAD(+) site. D-glyceraldehyde 3-phosphate contacts are provided by residues 150 to 152 (SCT), threonine 181, 210 to 211 (TG), and arginine 233. The active-site Nucleophile is the cysteine 151. Asparagine 315 is an NAD(+) binding site.

The protein belongs to the glyceraldehyde-3-phosphate dehydrogenase family. Homotetramer.

Its subcellular location is the cytoplasm. It catalyses the reaction D-glyceraldehyde 3-phosphate + phosphate + NAD(+) = (2R)-3-phospho-glyceroyl phosphate + NADH + H(+). It functions in the pathway carbohydrate degradation; glycolysis; pyruvate from D-glyceraldehyde 3-phosphate: step 1/5. This chain is Glyceraldehyde-3-phosphate dehydrogenase (GPD), found in Sordaria macrospora.